We begin with the raw amino-acid sequence, 314 residues long: WD repeat-containing protein 38 (314 aa).

7 WD repeats span residues Gln-19 to Arg-58, Gly-61 to Val-100, Gly-103 to Leu-142, Gly-145 to Ser-184, Gly-190 to Gln-228, Gly-231 to Lys-272, and Val-274 to Pro-312. The interval Ala-294–Thr-314 is disordered.

In Homo sapiens (Human), this protein is WD repeat-containing protein 38 (WDR38).